Reading from the N-terminus, the 99-residue chain is Probable non-specific lipid-transfer protein AKCS9 (99 aa).

An N-terminal signal peptide occupies residues 1–33 (MTMKMKMKMSVVCAVVVVALFLIDVGPVAEAVT). 4 cysteine pairs are disulfide-bonded: Cys-34–Cys-68, Cys-42–Cys-56, Cys-57–Cys-92, and Cys-66–Cys-99.

This sequence belongs to the plant LTP family. Expressed in most tissues except nodules.

Functionally, potential lipid transfer protein. The sequence is that of Probable non-specific lipid-transfer protein AKCS9 from Vigna unguiculata (Cowpea).